A 199-amino-acid polypeptide reads, in one-letter code: Peroxiredoxin-1 (199 aa).

Serine 2 carries the post-translational modification N-acetylserine. In terms of domain architecture, Thioredoxin spans 6–165 (AKIGYPAPNF…ILRLVQAFQF (160 aa)). Lysine 7 carries the N6-acetyllysine; alternate modification. Residue lysine 7 forms a Glycyl lysine isopeptide (Lys-Gly) (interchain with G-Cter in SUMO2); alternate linkage. Lysine 16 bears the N6-acetyllysine mark. At serine 32 the chain carries Phosphoserine. Catalysis depends on cysteine 52, which acts as the Cysteine sulfenic acid (-SOH) intermediate. Threonine 90 carries the phosphothreonine modification. A Glycyl lysine isopeptide (Lys-Gly) (interchain with G-Cter in SUMO2) cross-link involves residue lysine 120. Residue lysine 136 is modified to N6-acetyllysine. The interval 176–199 (GWKPGSDTIKPDVQKSKEYFSKQK) is disordered. Positions 184–199 (IKPDVQKSKEYFSKQK) are enriched in basic and acidic residues. Lysine 185 participates in a covalent cross-link: Glycyl lysine isopeptide (Lys-Gly) (interchain with G-Cter in SUMO1). Lysine 197 carries the N6-acetyllysine modification.

The protein belongs to the peroxiredoxin family. AhpC/Prx1 subfamily. As to quaternary structure, homodimer; disulfide-linked, upon oxidation. 5 homodimers assemble to form a ring-like decamer. Interacts with GDPD5; forms a mixed-disulfide with GDPD5. Interacts with SESN1 and SESN2. Interacts with FAM107A. In terms of processing, phosphorylated on Thr-90 during the M-phase, which leads to a decrease in enzymatic activity. Post-translationally, acetylation increases reducing activity and resistance to superoxidation. Deacetylated by HDAC6 which decreases reducing activity.

The protein localises to the cytoplasm. It catalyses the reaction a hydroperoxide + [thioredoxin]-dithiol = an alcohol + [thioredoxin]-disulfide + H2O. Functionally, thiol-specific peroxidase that catalyzes the reduction of hydrogen peroxide and organic hydroperoxides to water and alcohols, respectively. Plays a role in cell protection against oxidative stress by detoxifying peroxides and as sensor of hydrogen peroxide-mediated signaling events. Might participate in the signaling cascades of growth factors and tumor necrosis factor-alpha by regulating the intracellular concentrations of H(2)O(2). Reduces an intramolecular disulfide bond in GDPD5 that gates the ability to GDPD5 to drive postmitotic motor neuron differentiation. The sequence is that of Peroxiredoxin-1 (PRDX1) from Cricetulus griseus (Chinese hamster).